The following is a 158-amino-acid chain: uncharacterized protein (158 aa).

Residues 77 to 132 (AIKRNKIGGSKRSEVHSNRSKNYSSKKFRSQKCRRSRQKKRQNKKPNNSRFISSNK) are disordered. Positions 100 to 120 (SSKKFRSQKCRRSRQKKRQNK) are enriched in basic residues.

This is an uncharacterized protein from Acanthamoeba polyphaga mimivirus (APMV).